The sequence spans 156 residues: Ribosomal RNA large subunit methyltransferase H (156 aa).

S-adenosyl-L-methionine is bound by residues Leu-73, Gly-104, and 123–128 (IGPLTL).

Belongs to the RNA methyltransferase RlmH family. As to quaternary structure, homodimer.

Its subcellular location is the cytoplasm. It carries out the reaction pseudouridine(1915) in 23S rRNA + S-adenosyl-L-methionine = N(3)-methylpseudouridine(1915) in 23S rRNA + S-adenosyl-L-homocysteine + H(+). In terms of biological role, specifically methylates the pseudouridine at position 1915 (m3Psi1915) in 23S rRNA. This chain is Ribosomal RNA large subunit methyltransferase H, found in Xanthomonas euvesicatoria pv. vesicatoria (strain 85-10) (Xanthomonas campestris pv. vesicatoria).